Consider the following 422-residue polypeptide: Enolase (422 aa).

A (2R)-2-phosphoglycerate-binding site is contributed by glutamine 162. Glutamate 204 serves as the catalytic Proton donor. Aspartate 241, glutamate 285, and aspartate 312 together coordinate Mg(2+). (2R)-2-phosphoglycerate contacts are provided by lysine 337, arginine 366, serine 367, and lysine 388. Lysine 337 functions as the Proton acceptor in the catalytic mechanism.

It belongs to the enolase family. It depends on Mg(2+) as a cofactor.

The protein resides in the cytoplasm. It is found in the secreted. The protein localises to the cell surface. It catalyses the reaction (2R)-2-phosphoglycerate = phosphoenolpyruvate + H2O. It functions in the pathway carbohydrate degradation; glycolysis; pyruvate from D-glyceraldehyde 3-phosphate: step 4/5. Functionally, catalyzes the reversible conversion of 2-phosphoglycerate (2-PG) into phosphoenolpyruvate (PEP). It is essential for the degradation of carbohydrates via glycolysis. This is Enolase from Wolinella succinogenes (strain ATCC 29543 / DSM 1740 / CCUG 13145 / JCM 31913 / LMG 7466 / NCTC 11488 / FDC 602W) (Vibrio succinogenes).